The primary structure comprises 309 residues: uncharacterized protein (309 aa).

Disordered regions lie at residues 1-94 and 286-309; these read IGEV…RQQI and HTRN…PPRG. Positions 30–43 are enriched in pro residues; that stretch reads PAQPPSPAPTPSRT. Over residues 58-67 the composition is skewed to basic and acidic residues; that stretch reads RSKTPDKRSA. The segment covering 297–309 has biased composition (pro residues); the sequence is KNTPPPLEDPPRG.

This is an uncharacterized protein from Homo sapiens (Human).